A 421-amino-acid chain; its full sequence is Structure-specific endonuclease subunit SLX1 (421 aa).

The GIY-YIG domain occupies 13 to 95 (AFYCCYLLRS…QHTKESRHAE (83 aa)). 2 disordered regions span residues 34–57 (TPEP…KTSS) and 96–120 (VERC…KRAG). The SLX1-type zinc-finger motif lies at 225–280 (CGVCKQRLNPRNDMIAICSHSLCRCASHLLCLSAHFLEAAGFIGKLIPKEGTCPAC). Basic residues predominate over residues 310-322 (RRRTEQVGKRKIS). Positions 310–339 (RRRTEQVGKRKISNHVSSEKGESEASMPST) are disordered.

Belongs to the SLX1 family. In terms of assembly, forms a heterodimer with SLX4. It depends on a divalent metal cation as a cofactor.

Its subcellular location is the nucleus. In terms of biological role, catalytic subunit of the SLX1-SLX4 structure-specific endonuclease that resolves DNA secondary structures generated during DNA repair and recombination. Has endonuclease activity towards branched DNA substrates, introducing single-strand cuts in duplex DNA close to junctions with ss-DNA. The sequence is that of Structure-specific endonuclease subunit SLX1 from Ajellomyces capsulatus (strain G186AR / H82 / ATCC MYA-2454 / RMSCC 2432) (Darling's disease fungus).